The sequence spans 185 residues: Large ribosomal subunit protein uL5 (185 aa).

Belongs to the universal ribosomal protein uL5 family. In terms of assembly, part of the 50S ribosomal subunit; part of the 5S rRNA/L5/L18/L25 subcomplex. Contacts the 5S rRNA and the P site tRNA. Forms a bridge to the 30S subunit in the 70S ribosome.

Functionally, this is one of the proteins that bind and probably mediate the attachment of the 5S RNA into the large ribosomal subunit, where it forms part of the central protuberance. In the 70S ribosome it contacts protein S13 of the 30S subunit (bridge B1b), connecting the 2 subunits; this bridge is implicated in subunit movement. Contacts the P site tRNA; the 5S rRNA and some of its associated proteins might help stabilize positioning of ribosome-bound tRNAs. The protein is Large ribosomal subunit protein uL5 of Streptomyces avermitilis (strain ATCC 31267 / DSM 46492 / JCM 5070 / NBRC 14893 / NCIMB 12804 / NRRL 8165 / MA-4680).